The following is a 280-amino-acid chain: 2-dehydro-3-deoxyphosphooctonate aldolase (280 aa).

It belongs to the KdsA family.

The protein localises to the cytoplasm. It carries out the reaction D-arabinose 5-phosphate + phosphoenolpyruvate + H2O = 3-deoxy-alpha-D-manno-2-octulosonate-8-phosphate + phosphate. The protein operates within carbohydrate biosynthesis; 3-deoxy-D-manno-octulosonate biosynthesis; 3-deoxy-D-manno-octulosonate from D-ribulose 5-phosphate: step 2/3. It participates in bacterial outer membrane biogenesis; lipopolysaccharide biosynthesis. The sequence is that of 2-dehydro-3-deoxyphosphooctonate aldolase from Pseudomonas putida (strain W619).